A 969-amino-acid polypeptide reads, in one-letter code: Leucine--tRNA ligase (969 aa).

The short motif at 46 to 56 (PYLNGVLHAGH) is the 'HIGH' region element. The short motif at 658–662 (KLSKS) is the 'KMSKS' region element. ATP is bound at residue Lys-661.

Belongs to the class-I aminoacyl-tRNA synthetase family.

Its subcellular location is the cytoplasm. The enzyme catalyses tRNA(Leu) + L-leucine + ATP = L-leucyl-tRNA(Leu) + AMP + diphosphate. In Methanococcus aeolicus (strain ATCC BAA-1280 / DSM 17508 / OCM 812 / Nankai-3), this protein is Leucine--tRNA ligase.